The chain runs to 192 residues: uncharacterized protein (192 aa).

Positions 29–160 (HRQAAVLIPI…PLDIYRRGDS (132 aa)) constitute a Nudix hydrolase domain. The Nudix box motif lies at 67–89 (GAVDDTDASVIAAALREAEEEVA). The Mg(2+) site is built by Glu-83 and Glu-87.

It belongs to the Nudix hydrolase family. PCD1 subfamily. Mn(2+) is required as a cofactor. Requires Mg(2+) as cofactor.

Its function is as follows. Probably mediates the hydrolysis of some nucleoside diphosphate derivatives. This is an uncharacterized protein from Escherichia coli O139:H28 (strain E24377A / ETEC).